A 431-amino-acid chain; its full sequence is Na(+)/H(+) antiporter NhaA 1 (431 aa).

The next 11 helical transmembrane spans lie at 17 to 37 (LSGI…NSNF), 56 to 76 (FIIS…LFFL), 98 to 118 (MFPF…YIAL), 123 to 143 (FIGF…MLIL), 154 to 174 (LFLV…VATV), 182 to 202 (EYFL…YFDV), 209 to 229 (LFLG…ATIA), 301 to 321 (FSAF…LLDF), 329 to 349 (MIVL…IFGF), 373 to 393 (VGFI…LAFI), and 400 to 420 (AIKI…MILI).

It belongs to the NhaA Na(+)/H(+) (TC 2.A.33) antiporter family.

It localises to the cell inner membrane. The enzyme catalyses Na(+)(in) + 2 H(+)(out) = Na(+)(out) + 2 H(+)(in). In terms of biological role, na(+)/H(+) antiporter that extrudes sodium in exchange for external protons. The chain is Na(+)/H(+) antiporter NhaA 1 from Aliarcobacter butzleri (strain RM4018) (Arcobacter butzleri).